Here is a 908-residue protein sequence, read N- to C-terminus: Translation initiation factor IF-2 (908 aa).

Positions 145–312 (EIPGLTQRAK…KGKKRQAEKI (168 aa)) are disordered. Residues 167–177 (VVERPEARPSA) are compositionally biased toward basic and acidic residues. Composition is skewed to low complexity over residues 194-217 (RPEG…PRPG) and 263-276 (VAGA…GAAV). Residues 278 to 296 (KRKEEFKKTELFEKHERVF) show a composition bias toward basic and acidic residues. Residues 408–577 (KRPPVVTIMG…LLQADVLELK (170 aa)) enclose the tr-type G domain. The segment at 417 to 424 (GHVDHGKT) is G1. 417-424 (GHVDHGKT) is a binding site for GTP. Residues 442 to 446 (GITQH) are G2. Residues 463–466 (DTPG) form a G3 region. GTP-binding positions include 463–467 (DTPGH) and 517–520 (NKID). The tract at residues 517 to 520 (NKID) is G4. Positions 553 to 555 (SAK) are G5.

Belongs to the TRAFAC class translation factor GTPase superfamily. Classic translation factor GTPase family. IF-2 subfamily.

It is found in the cytoplasm. Functionally, one of the essential components for the initiation of protein synthesis. Protects formylmethionyl-tRNA from spontaneous hydrolysis and promotes its binding to the 30S ribosomal subunits. Also involved in the hydrolysis of GTP during the formation of the 70S ribosomal complex. The sequence is that of Translation initiation factor IF-2 from Geotalea daltonii (strain DSM 22248 / JCM 15807 / FRC-32) (Geobacter daltonii).